We begin with the raw amino-acid sequence, 266 residues long: Glucosamine-6-phosphate deaminase (266 aa).

Asp-67 functions as the Proton acceptor; for enolization step in the catalytic mechanism. Catalysis depends on Asn-139, which acts as the For ring-opening step. His-141 (proton acceptor; for ring-opening step) is an active-site residue. Glu-146 acts as the For ring-opening step in catalysis.

It belongs to the glucosamine/galactosamine-6-phosphate isomerase family. NagB subfamily. Homohexamer.

The enzyme catalyses alpha-D-glucosamine 6-phosphate + H2O = beta-D-fructose 6-phosphate + NH4(+). It functions in the pathway amino-sugar metabolism; N-acetylneuraminate degradation; D-fructose 6-phosphate from N-acetylneuraminate: step 5/5. Functionally, catalyzes the reversible isomerization-deamination of glucosamine 6-phosphate (GlcN6P) to form fructose 6-phosphate (Fru6P) and ammonium ion. This is Glucosamine-6-phosphate deaminase from Marinomonas sp. (strain MWYL1).